The sequence spans 236 residues: 15,16-dihydrobiliverdin:ferredoxin oxidoreductase (236 aa).

It belongs to the HY2 family.

It carries out the reaction 15,16-dihydrobiliverdin + oxidized 2[4Fe-4S]-[ferredoxin] = biliverdin IXalpha + reduced 2[4Fe-4S]-[ferredoxin] + 2 H(+). Catalyzes the two-electron reduction of biliverdin IX-alpha at the C15 methine bridge. The sequence is that of 15,16-dihydrobiliverdin:ferredoxin oxidoreductase from Prochlorococcus marinus (strain AS9601).